The sequence spans 296 residues: Trimeric intracellular cation channel type A (296 aa).

Residues 1-19 (MELPGALQLGELAAAFASV) lie on the Lumenal side of the membrane. Residues 20–37 (PVFPLFDAAYFIVSVLYL) form a helical membrane-spanning segment. Topologically, residues 38–51 (KYEPGAVEMSRKSP) are cytoplasmic. The helical transmembrane segment at 52-73 (FASWLCAMLHCFGSYILADLLL) threads the bilayer. Gly74 provides a ligand contact to Ca(2+). Over 74–85 (GESPIHYFSNNS) the chain is Lumenal. A helical membrane pass occupies residues 86–103 (SVILATAVWYLIFFCPMN). The Cytoplasmic portion of the chain corresponds to 104–107 (LFYK). A helical transmembrane segment spans residues 108–126 (CVSFLPVKLIFVAMKEVVR). 2 residues coordinate a 1,2-diacyl-sn-glycero-3-phospho-(1D-myo-inositol-4,5-bisphosphate): Lys122 and Arg126. Topologically, residues 127–144 (VRKIAAGVHHAHHQYHHG) are lumenal. Residues 145 to 162 (WFIMMATGWVKGSGVALM) traverse the membrane as a helical segment. The Cytoplasmic portion of the chain corresponds to 163–183 (SNFEQLLRGVWRPETNEILHM). The helical transmembrane segment at 184-201 (SFPTKASLYGTVLFTLQQ) threads the bilayer. The Lumenal portion of the chain corresponds to 202-209 (THWLPVSE). The helical transmembrane segment at 210 to 230 (ANLVFFFTMFMIVCKVFMTAT) threads the bilayer. Residues 231–273 (HSHASPFAPVEGFICPVFFGSVSSGHTSHHNQHGHSHEASYQP) are Cytoplasmic-facing. The tract at residues 256-296 (HTSHHNQHGHSHEASYQPPPPVKSKEELNEGTRKRKAKKAE) is disordered. A compositionally biased stretch (basic and acidic residues) spans 278–287 (KSKEELNEGT).

Belongs to the TMEM38 family. As to quaternary structure, homotrimer; conformation seems to be controled by binding to diacylglycerol (DAG).

Its subcellular location is the sarcoplasmic reticulum membrane. It is found in the nucleus membrane. The enzyme catalyses K(+)(in) = K(+)(out). Channel activity is activated by a change of voltage within the sarcoplasmic reticulum lumen and blocked by luminal high Ca(2+) levels. Functionally, intracellular monovalent cation channel required for maintenance of rapid intracellular calcium release. Acts as a potassium counter-ion channel that functions in synchronization with calcium release from intracellular stores. Opened by a change of voltage within the sarcoplasmic reticulum lumen. The chain is Trimeric intracellular cation channel type A (TMEM38A) from Gallus gallus (Chicken).